The sequence spans 571 residues: Serine/threonine-protein kinase Nek7 (571 aa).

Residues 19–277 (YHVVEQVRRG…LRNPSLQPYL (259 aa)) enclose the Protein kinase domain. ATP contacts are provided by residues 25 to 33 (VRRGKSSSD) and K48. The active-site Proton acceptor is D144. 2 disordered regions span residues 298–321 (SPKDKARRNSLPGKFGKERVSREK) and 338–363 (TETGSSSSSQPASSTNGAEDKLETKR). Residues 312–321 (FGKERVSREK) show a composition bias toward basic and acidic residues. Positions 342 to 351 (SSSSSQPASS) are enriched in low complexity.

Belongs to the protein kinase superfamily. NEK Ser/Thr protein kinase family. NIMA subfamily.

The enzyme catalyses L-seryl-[protein] + ATP = O-phospho-L-seryl-[protein] + ADP + H(+). It carries out the reaction L-threonyl-[protein] + ATP = O-phospho-L-threonyl-[protein] + ADP + H(+). May be involved in plant development processes. This is Serine/threonine-protein kinase Nek7 (NEK7) from Arabidopsis thaliana (Mouse-ear cress).